Consider the following 1070-residue polypeptide: Carbamoyl phosphate synthase large chain (1070 aa).

Positions 1 to 401 are carboxyphosphate synthetic domain; it reads MPKRDDIKTI…ALLKAVRSLE (401 aa). The ATP site is built by Arg129, Arg169, Gly175, Gly176, Lys208, Ile210, Glu215, Gly241, Ile242, His243, Gln284, and Glu298. Positions 133-327 constitute an ATP-grasp 1 domain; sequence RDLMNELGEP…IAKLAAKIAV (195 aa). Positions 284, 298, and 300 each coordinate Mg(2+). Residues Gln284, Glu298, and Asn300 each coordinate Mn(2+). The segment at 402-546 is oligomerization domain; the sequence is IGADHLLLEE…YSTYEDENES (145 aa). A carbamoyl phosphate synthetic domain region spans residues 547–929; sequence IRSSKESVIV…ALYKGFVASG (383 aa). Residues 671-861 enclose the ATP-grasp 2 domain; the sequence is EKALEILQIP…MANVATRVIL (191 aa). The ATP site is built by Arg707, Arg746, Val748, Glu752, Gly777, Val778, His779, Ser780, Gln820, and Glu832. Residues Gln820, Glu832, and Asn834 each coordinate Mg(2+). Residues Gln820, Glu832, and Asn834 each coordinate Mn(2+). In terms of domain architecture, MGS-like spans 930 to 1070; the sequence is TTMHDYGTVL…SEVKQPKARV (141 aa). Residues 930–1070 are allosteric domain; it reads TTMHDYGTVL…SEVKQPKARV (141 aa).

It belongs to the CarB family. In terms of assembly, composed of two chains; the small (or glutamine) chain promotes the hydrolysis of glutamine to ammonia, which is used by the large (or ammonia) chain to synthesize carbamoyl phosphate. Tetramer of heterodimers (alpha,beta)4. Mg(2+) serves as cofactor. The cofactor is Mn(2+).

The catalysed reaction is hydrogencarbonate + L-glutamine + 2 ATP + H2O = carbamoyl phosphate + L-glutamate + 2 ADP + phosphate + 2 H(+). It carries out the reaction hydrogencarbonate + NH4(+) + 2 ATP = carbamoyl phosphate + 2 ADP + phosphate + 2 H(+). Its pathway is amino-acid biosynthesis; L-arginine biosynthesis; carbamoyl phosphate from bicarbonate: step 1/1. The protein operates within pyrimidine metabolism; UMP biosynthesis via de novo pathway; (S)-dihydroorotate from bicarbonate: step 1/3. Functionally, large subunit of the glutamine-dependent carbamoyl phosphate synthetase (CPSase). CPSase catalyzes the formation of carbamoyl phosphate from the ammonia moiety of glutamine, carbonate, and phosphate donated by ATP, constituting the first step of 2 biosynthetic pathways, one leading to arginine and/or urea and the other to pyrimidine nucleotides. The large subunit (synthetase) binds the substrates ammonia (free or transferred from glutamine from the small subunit), hydrogencarbonate and ATP and carries out an ATP-coupled ligase reaction, activating hydrogencarbonate by forming carboxy phosphate which reacts with ammonia to form carbamoyl phosphate. The protein is Carbamoyl phosphate synthase large chain of Listeria innocua serovar 6a (strain ATCC BAA-680 / CLIP 11262).